The sequence spans 407 residues: Digeranylgeranylglycerophospholipid reductase (407 aa).

Positions 15, 34, 45, 46, 48, 99, 123, 281, 293, and 294 each coordinate FAD.

Belongs to the geranylgeranyl reductase family. DGGGPL reductase subfamily. Requires FAD as cofactor.

It catalyses the reaction a 2,3-bis-O-phytanyl-sn-glycerol 1-phospholipid + 8 oxidized 2[4Fe-4S]-[ferredoxin] = a 2,3-bis-O-(geranylgeranyl)-sn-glycerol 1-phospholipid + 8 reduced 2[4Fe-4S]-[ferredoxin] + 16 H(+). It carries out the reaction 2,3-bis-O-(phytanyl)-sn-glycerol 1-phosphate + 8 oxidized 2[4Fe-4S]-[ferredoxin] = 2,3-bis-O-(geranylgeranyl)-sn-glycerol 1-phosphate + 8 reduced 2[4Fe-4S]-[ferredoxin] + 16 H(+). The catalysed reaction is a 2,3-bis-O-phytanyl-sn-glycerol 1-phospholipid + 8 A = a 2,3-bis-O-(geranylgeranyl)-sn-glycerol 1-phospholipid + 8 AH2. The enzyme catalyses CDP-2,3-bis-O-(geranylgeranyl)-sn-glycerol + 8 AH2 = CDP-2,3-bis-O-(phytanyl)-sn-glycerol + 8 A. It catalyses the reaction archaetidylserine + 8 AH2 = 2,3-bis-O-phytanyl-sn-glycero-3-phospho-L-serine + 8 A. Its pathway is membrane lipid metabolism; glycerophospholipid metabolism. In terms of biological role, is involved in the reduction of 2,3-digeranylgeranylglycerophospholipids (unsaturated archaeols) into 2,3-diphytanylglycerophospholipids (saturated archaeols) in the biosynthesis of archaeal membrane lipids. Catalyzes the formation of archaetidic acid (2,3-di-O-phytanyl-sn-glyceryl phosphate) from 2,3-di-O-geranylgeranylglyceryl phosphate (DGGGP) via the hydrogenation of each double bond of the isoprenoid chains. Requires the adjacently encoded ferredoxin MA_1485 as the electron donor. Is also probably able to reduce double bonds of geranyl groups in CDP-2,3-bis-O-(geranylgeranyl)-sn-glycerol and archaetidylserine, thus acting at various stages in the biosynthesis of archaeal membrane lipids. The protein is Digeranylgeranylglycerophospholipid reductase of Methanosarcina acetivorans (strain ATCC 35395 / DSM 2834 / JCM 12185 / C2A).